We begin with the raw amino-acid sequence, 133 residues long: Glycine cleavage system H protein (133 aa).

In terms of domain architecture, Lipoyl-binding spans threonine 30–lysine 112. Position 71 is an N6-lipoyllysine (lysine 71).

It belongs to the GcvH family. As to quaternary structure, the glycine cleavage system is composed of four proteins: P, T, L and H. The cofactor is (R)-lipoate.

The glycine cleavage system catalyzes the degradation of glycine. The H protein shuttles the methylamine group of glycine from the P protein to the T protein. The polypeptide is Glycine cleavage system H protein (Neisseria gonorrhoeae (strain ATCC 700825 / FA 1090)).